The primary structure comprises 174 residues: Disulfide bond formation protein B (174 aa).

At 1 to 17 (MSFQVVTGWLDNSPRRI) the chain is on the cytoplasmic side. The chain crosses the membrane as a helical span at residues 18–34 (FAFVSLASIGMLAFGQY). Over 35–52 (LQHVVGLEPCPMCIVQRY) the chain is Periplasmic. Cysteine 44 and cysteine 47 are oxidised to a cystine. The helical transmembrane segment at 53 to 67 (ALVLVAIIAGLTGAS) threads the bilayer. Residues 68 to 74 (GRKGLHL) lie on the Cytoplasmic side of the membrane. The chain crosses the membrane as a helical span at residues 75–92 (GGAVLMLGSSGFGAYVAA). The Periplasmic portion of the chain corresponds to 93 to 148 (RQSWLQWYPPEVVSCGRDFYGMIETFPLQRAIPMIFKGSGDCSKVDWTFLGGSIAN). Cysteines 107 and 134 form a disulfide. A helical transmembrane segment spans residues 149-167 (WTFVVFGLIVLLSLALIWR). Topologically, residues 168 to 174 (RVSRRVS) are cytoplasmic.

The protein belongs to the DsbB family.

It is found in the cell inner membrane. Required for disulfide bond formation in some periplasmic proteins. Acts by oxidizing the DsbA protein. The protein is Disulfide bond formation protein B of Albidiferax ferrireducens (strain ATCC BAA-621 / DSM 15236 / T118) (Rhodoferax ferrireducens).